We begin with the raw amino-acid sequence, 141 residues long: uncharacterized protein (141 aa).

3 consecutive transmembrane segments (helical) span residues 32–52, 69–89, and 109–129; these read LIVLIFSILIAISAYISTSII, IIALISTFIGGIVAWLIIAGF, and FTGYGFLPNIVGALITIPIAY.

The protein localises to the cell membrane. This is an uncharacterized protein from Methanocaldococcus jannaschii (strain ATCC 43067 / DSM 2661 / JAL-1 / JCM 10045 / NBRC 100440) (Methanococcus jannaschii).